The chain runs to 259 residues: Keratin-associated protein 10-8 (259 aa).

A 19 X 5 AA repeats of C-C-X(3) region spans residues 26–243; the sequence is HVSRVSSPST…SCQPSCCHPA (218 aa). Tandem repeats lie at residues 50 to 54, 60 to 64, 65 to 69, 98 to 102, 108 to 112, 118 to 122, 123 to 127, 133 to 137, 145 to 149, 155 to 159, 165 to 169, 170 to 174, 175 to 179, 187 to 191, 197 to 201, 202 to 206, 221 to 225, 228 to 232, and 239 to 243.

The protein belongs to the KRTAP type 10 family. Interacts with hair keratins. In terms of tissue distribution, restricted to a narrow region of the hair fiber cuticle, lying approximately 20 cell layers above the apex of the dermal papilla of the hair root; not detected in any other tissues.

In the hair cortex, hair keratin intermediate filaments are embedded in an interfilamentous matrix, consisting of hair keratin-associated proteins (KRTAP), which are essential for the formation of a rigid and resistant hair shaft through their extensive disulfide bond cross-linking with abundant cysteine residues of hair keratins. The matrix proteins include the high-sulfur and high-glycine-tyrosine keratins. This is Keratin-associated protein 10-8 (KRTAP10-8) from Homo sapiens (Human).